The chain runs to 359 residues: Prostaglandin D2 receptor (359 aa).

The Extracellular segment spans residues 1-21; the sequence is MKSPFYRCQNTTSVEKGNSAV. Residue Asn-10 is glycosylated (N-linked (GlcNAc...) asparagine). A helical transmembrane segment spans residues 22–42; the sequence is MGGVLFSTGLLGNLLALGLLA. Residues 43 to 59 lie on the Cytoplasmic side of the membrane; the sequence is RSGLGWCSRRPLRPLPS. Residues 60–80 form a helical membrane-spanning segment; the sequence is VFYMLVCGLTVTDLLGKCLLS. At 81-107 the chain is on the extracellular side; sequence PVVLAAYAQNRSLRVLAPALDNSLCQA. N-linked (GlcNAc...) asparagine glycosylation occurs at Asn-90. A disulfide bond links Cys-105 and Cys-183. The chain crosses the membrane as a helical span at residues 108 to 128; the sequence is FAFFMSFFGLSSTLQLLAMAL. Residues 129 to 150 lie on the Cytoplasmic side of the membrane; sequence ECWLSLGHPFFYRRHITLRLGA. The helical transmembrane segment at 151 to 171 threads the bilayer; sequence LVAPVVSAFSLAFCALPFMGF. Over 172-195 the chain is Extracellular; sequence GKFVQYCPGTWCFIQMVHEEGSLS. The chain crosses the membrane as a helical span at residues 196–216; that stretch reads VLGYSVLYSSLMALLVLATVL. Topologically, residues 217–262 are cytoplasmic; it reads CNLGAMRNLYAMHRRLQRHPRSCTRDCAEPRADGREASPQPLEELD. The chain crosses the membrane as a helical span at residues 263–283; the sequence is HLLLLALMTVLFTMCSLPVIY. Topologically, residues 284-310 are extracellular; the sequence is RAYYGAFKDVKEKNRTSEEAEDLRALR. Asn-297 is a glycosylation site (N-linked (GlcNAc...) asparagine). Residues 311 to 331 traverse the membrane as a helical segment; it reads FLSVISIVDPWIFIIFRSPVF. At 332–359 the chain is on the cytoplasmic side; that stretch reads RIFFHKIFIRPLRYRSRCSNSTNMESSL.

This sequence belongs to the G-protein coupled receptor 1 family. As to expression, expressed in retinal choroid, ciliary epithelium, longitudinal and circular ciliary muscles, iris, small intestine and platelet membranes.

It is found in the cell membrane. Receptor for prostaglandin D2 (PGD2). The activity of this receptor is mainly mediated by G(s) proteins that stimulate adenylate cyclase, resulting in an elevation of intracellular cAMP. A mobilization of calcium is also observed, but without formation of inositol 1,4,5-trisphosphate. Involved in PLA2G3-dependent maturation of mast cells. PLA2G3 is secreted by immature mast cells and acts on nearby fibroblasts upstream to PTDGS to synthesize PGD2, which in turn promotes mast cell maturation and degranulation via PTGDR. The protein is Prostaglandin D2 receptor (PTGDR) of Homo sapiens (Human).